We begin with the raw amino-acid sequence, 489 residues long: Bifunctional protein HldE (489 aa).

Positions 1–330 (MFDFDGLSNA…RKILPPAFLA (330 aa)) are ribokinase. Residue 205–208 (NRKE) participates in ATP binding. Aspartate 275 is a catalytic residue. A cytidylyltransferase region spans residues 358–489 (FTNGCFDILH…SLVKRAGGRA (132 aa)).

The protein in the N-terminal section; belongs to the carbohydrate kinase PfkB family. In the C-terminal section; belongs to the cytidylyltransferase family. In terms of assembly, homodimer.

The enzyme catalyses D-glycero-beta-D-manno-heptose 7-phosphate + ATP = D-glycero-beta-D-manno-heptose 1,7-bisphosphate + ADP + H(+). The catalysed reaction is D-glycero-beta-D-manno-heptose 1-phosphate + ATP + H(+) = ADP-D-glycero-beta-D-manno-heptose + diphosphate. Its pathway is nucleotide-sugar biosynthesis; ADP-L-glycero-beta-D-manno-heptose biosynthesis; ADP-L-glycero-beta-D-manno-heptose from D-glycero-beta-D-manno-heptose 7-phosphate: step 1/4. The protein operates within nucleotide-sugar biosynthesis; ADP-L-glycero-beta-D-manno-heptose biosynthesis; ADP-L-glycero-beta-D-manno-heptose from D-glycero-beta-D-manno-heptose 7-phosphate: step 3/4. Its function is as follows. Catalyzes the phosphorylation of D-glycero-D-manno-heptose 7-phosphate at the C-1 position to selectively form D-glycero-beta-D-manno-heptose-1,7-bisphosphate. Catalyzes the ADP transfer from ATP to D-glycero-beta-D-manno-heptose 1-phosphate, yielding ADP-D-glycero-beta-D-manno-heptose. The chain is Bifunctional protein HldE from Nitrobacter hamburgensis (strain DSM 10229 / NCIMB 13809 / X14).